A 280-amino-acid polypeptide reads, in one-letter code: Adenosylcobinamide-GDP ribazoletransferase (280 aa).

The next 6 helical transmembrane spans lie at 44–64 (GVGV…LFVL), 69–89 (STPL…TGAF), 111–131 (LVIM…MLAL), 135–155 (VALL…ALFV), 189–209 (ISVA…ALVI), and 226–246 (ALLQ…AVMA).

This sequence belongs to the CobS family. Requires Mg(2+) as cofactor.

Its subcellular location is the cell inner membrane. The enzyme catalyses alpha-ribazole + adenosylcob(III)inamide-GDP = adenosylcob(III)alamin + GMP + H(+). The catalysed reaction is alpha-ribazole 5'-phosphate + adenosylcob(III)inamide-GDP = adenosylcob(III)alamin 5'-phosphate + GMP + H(+). Its pathway is cofactor biosynthesis; adenosylcobalamin biosynthesis; adenosylcobalamin from cob(II)yrinate a,c-diamide: step 7/7. Joins adenosylcobinamide-GDP and alpha-ribazole to generate adenosylcobalamin (Ado-cobalamin). Also synthesizes adenosylcobalamin 5'-phosphate from adenosylcobinamide-GDP and alpha-ribazole 5'-phosphate. The polypeptide is Adenosylcobinamide-GDP ribazoletransferase (Albidiferax ferrireducens (strain ATCC BAA-621 / DSM 15236 / T118) (Rhodoferax ferrireducens)).